A 424-amino-acid chain; its full sequence is Glutamyl-tRNA reductase (424 aa).

Residues T49–R52, S105, E110–Q112, and Q116 each bind substrate. C50 acts as the Nucleophile in catalysis. G185–A190 serves as a coordination point for NADP(+).

Belongs to the glutamyl-tRNA reductase family. Homodimer.

The catalysed reaction is (S)-4-amino-5-oxopentanoate + tRNA(Glu) + NADP(+) = L-glutamyl-tRNA(Glu) + NADPH + H(+). Its pathway is porphyrin-containing compound metabolism; protoporphyrin-IX biosynthesis; 5-aminolevulinate from L-glutamyl-tRNA(Glu): step 1/2. In terms of biological role, catalyzes the NADPH-dependent reduction of glutamyl-tRNA(Glu) to glutamate 1-semialdehyde (GSA). The polypeptide is Glutamyl-tRNA reductase (Legionella pneumophila (strain Corby)).